Here is a 125-residue protein sequence, read N- to C-terminus: Ribonuclease P protein component (125 aa).

This sequence belongs to the RnpA family. As to quaternary structure, consists of a catalytic RNA component (M1 or rnpB) and a protein subunit.

The catalysed reaction is Endonucleolytic cleavage of RNA, removing 5'-extranucleotides from tRNA precursor.. In terms of biological role, RNaseP catalyzes the removal of the 5'-leader sequence from pre-tRNA to produce the mature 5'-terminus. It can also cleave other RNA substrates such as 4.5S RNA. The protein component plays an auxiliary but essential role in vivo by binding to the 5'-leader sequence and broadening the substrate specificity of the ribozyme. This chain is Ribonuclease P protein component, found in Clostridium beijerinckii (strain ATCC 51743 / NCIMB 8052) (Clostridium acetobutylicum).